The primary structure comprises 152 residues: Lipoprotein signal peptidase (152 aa).

The next 2 helical transmembrane spans lie at 55–75 and 85–105; these read NKMWFFYIITVVFVVFIVFYM and LGISLGLILGGAIGNFIDRVF. Active-site residues include D111 and D129. Residues 124–144 form a helical membrane-spanning segment; sequence VFNIADSALCIGVVLIIIQTL.

It belongs to the peptidase A8 family.

The protein resides in the cell membrane. It carries out the reaction Release of signal peptides from bacterial membrane prolipoproteins. Hydrolyzes -Xaa-Yaa-Zaa-|-(S,diacylglyceryl)Cys-, in which Xaa is hydrophobic (preferably Leu), and Yaa (Ala or Ser) and Zaa (Gly or Ala) have small, neutral side chains.. The protein operates within protein modification; lipoprotein biosynthesis (signal peptide cleavage). Its function is as follows. This protein specifically catalyzes the removal of signal peptides from prolipoproteins. The sequence is that of Lipoprotein signal peptidase from Bacillus cereus (strain G9842).